Reading from the N-terminus, the 822-residue chain is Fibroblast growth factor receptor 1 (822 aa).

The first 21 residues, 1-21 (MWSWKCLLFWAVLVTATLCTA), serve as a signal peptide directing secretion. The Extracellular segment spans residues 22–376 (RPSPTLPEQA…AVMTSPLYLE (355 aa)). The Ig-like C2-type 1 domain occupies 25–119 (PTLPEQAQPW…DTTYFSVNVS (95 aa)). Cysteine 55 and cysteine 101 are disulfide-bonded. N-linked (GlcNAc...) asparagine glycosylation is found at asparagine 77 and asparagine 117. The tract at residues 120–154 (DALPSSEDDDDDDDSSSEEKETDNTKPNRMPVAPY) is disordered. Residues 125-135 (SEDDDDDDDSS) show a composition bias toward acidic residues. Residues 136–145 (SEEKETDNTK) show a composition bias toward basic and acidic residues. 2 consecutive Ig-like C2-type domains span residues 158–246 (PEKM…YQLD) and 255–357 (PILQ…AWLT). The segment at 160 to 177 (KMEKKLHAVPAAKTVKFK) is heparin-binding. A disulfide bridge links cysteine 178 with cysteine 230. 6 N-linked (GlcNAc...) asparagine glycosylation sites follow: asparagine 227, asparagine 240, asparagine 264, asparagine 296, asparagine 317, and asparagine 330. A disulfide bond links cysteine 277 and cysteine 341. The chain crosses the membrane as a helical span at residues 377–397 (IIIYCTGAFLISCMVGSVIVY). At 398-822 (KMKSGTKKSD…QLANGGLKRR (425 aa)) the chain is on the cytoplasmic side. The residue at position 463 (tyrosine 463) is a Phosphotyrosine; by autocatalysis. Residues 478-767 (LVLGKPLGEG…VALTSNQEYL (290 aa)) enclose the Protein kinase domain. Residues 484 to 490 (LGEGCFG), lysine 514, 562 to 564 (EYA), and asparagine 568 contribute to the ATP site. Residues tyrosine 583 and tyrosine 585 each carry the phosphotyrosine; by autocatalysis modification. The Proton acceptor role is filled by aspartate 623. Residues arginine 627 and aspartate 641 each coordinate ATP. Phosphotyrosine; by autocatalysis occurs at positions 653, 654, 730, and 766. A compositionally biased stretch (polar residues) spans 778 to 792 (PSFPDTRSSTCSSGE). A disordered region spans residues 778 to 822 (PSFPDTRSSTCSSGEDSVFSHEPLPEEPCLPRHPAQLANGGLKRR).

The protein belongs to the protein kinase superfamily. Tyr protein kinase family. Fibroblast growth factor receptor subfamily. As to quaternary structure, monomer. Homodimer after ligand binding. Interacts predominantly with FGF1 and FGF2, but can also interact with FGF3, FGF4, FGF5, FGF6, FGF8, FGF10, FGF19, FGF21, FGF22 and FGF23 (in vitro). Ligand specificity is determined by tissue-specific expression of isoforms, and differences in the third Ig-like domain are crucial for ligand specificity. Affinity for fibroblast growth factors (FGFs) is increased by heparan sulfate glycosaminoglycans that function as coreceptors. Likewise, KLB increases the affinity for FGF19, FGF21 and FGF23. Interacts (phosphorylated on Tyr-766) with PLCG1 (via SH2 domains). Interacts with FRS2. Interacts with RPS6KA1. Interacts (via C-terminus) with NEDD4 (via WW3 domain). Interacts with KL. Interacts with SHB (via SH2 domain). Interacts with GRB10. Interacts with ANOS1; this interaction does not interfere with FGF2-binding to FGFR1, but prevents binding of heparin-bound FGF2. Interacts with SOX2 and SOX3. Interacts with FLRT1, FLRT2 and FLRT3. Found in a ternary complex with FGF1 and ITGAV:ITGB3. Post-translationally, autophosphorylated. Binding of FGF family members together with heparan sulfate proteoglycan or heparin promotes receptor dimerization and autophosphorylation on tyrosine residues. Autophosphorylation occurs in trans between the two FGFR molecules present in the dimer and proceeds in a highly ordered manner. Initial autophosphorylation at Tyr-653 increases the kinase activity by a factor of 50 to 100. After this, Tyr-583 becomes phosphorylated, followed by phosphorylation of Tyr-463, Tyr-766, Tyr-583 and Tyr-585. In a third stage, Tyr-654 is autophosphorylated, resulting in a further tenfold increase of kinase activity. Phosphotyrosine residues provide docking sites for interacting proteins and so are crucial for FGFR1 function and its regulation. Ubiquitinated. FGFR1 is rapidly ubiquitinated by NEDD4 after autophosphorylation, leading to internalization and lysosomal degradation. CBL is recruited to activated FGFR1 via FRS2 and GRB2, and mediates ubiquitination and subsequent degradation of FGFR1. In terms of processing, N-glycosylated in the endoplasmic reticulum. The N-glycan chains undergo further maturation to an Endo H-resistant form in the Golgi apparatus. As to expression, detected in astrocytoma, neuroblastoma and adrenal cortex cell lines. Some isoforms are detected in foreskin fibroblast cell lines, however isoform 17, isoform 18 and isoform 19 are not detected in these cells.

It is found in the cell membrane. The protein localises to the nucleus. It localises to the cytoplasm. The protein resides in the cytosol. Its subcellular location is the cytoplasmic vesicle. It catalyses the reaction L-tyrosyl-[protein] + ATP = O-phospho-L-tyrosyl-[protein] + ADP + H(+). Its activity is regulated as follows. Present in an inactive conformation in the absence of bound ligand. Ligand binding leads to dimerization and activation by sequential autophosphorylation on tyrosine residues. Inhibited by ARQ 069; this compound maintains the kinase in an inactive conformation and inhibits autophosphorylation. Inhibited by PD173074. In terms of biological role, tyrosine-protein kinase that acts as a cell-surface receptor for fibroblast growth factors and plays an essential role in the regulation of embryonic development, cell proliferation, differentiation and migration. Required for normal mesoderm patterning and correct axial organization during embryonic development, normal skeletogenesis and normal development of the gonadotropin-releasing hormone (GnRH) neuronal system. Phosphorylates PLCG1, FRS2, GAB1 and SHB. Ligand binding leads to the activation of several signaling cascades. Activation of PLCG1 leads to the production of the cellular signaling molecules diacylglycerol and inositol 1,4,5-trisphosphate. Phosphorylation of FRS2 triggers recruitment of GRB2, GAB1, PIK3R1 and SOS1, and mediates activation of RAS, MAPK1/ERK2, MAPK3/ERK1 and the MAP kinase signaling pathway, as well as of the AKT1 signaling pathway. Promotes phosphorylation of SHC1, STAT1 and PTPN11/SHP2. In the nucleus, enhances RPS6KA1 and CREB1 activity and contributes to the regulation of transcription. FGFR1 signaling is down-regulated by IL17RD/SEF, and by FGFR1 ubiquitination, internalization and degradation. This is Fibroblast growth factor receptor 1 (FGFR1) from Homo sapiens (Human).